Reading from the N-terminus, the 368-residue chain is Probable magnesium transporter (368 aa).

Over 1–4 the chain is Extracellular; it reads MEDK. The chain crosses the membrane as a helical span at residues 5 to 25; the sequence is YIGLALAMSSSLAIGTSFIIT. The Cytoplasmic portion of the chain corresponds to 26 to 50; the sequence is KKGLMDASARTGGTDGVQASDYLQN. A helical membrane pass occupies residues 51 to 71; that stretch reads PIWWGGMITMAIGEIANFAAY. The Extracellular portion of the chain corresponds to 72–76; sequence TFAPA. A helical membrane pass occupies residues 77 to 97; it reads ILVTPLGALSVIIGAVLAAIF. The Cytoplasmic portion of the chain corresponds to 98–101; it reads LKER. Residues 102–122 form a helical membrane-spanning segment; it reads LGTLGKMGCAICLMGSVIIIL. The Extracellular portion of the chain corresponds to 123–143; that stretch reads HAPPDKEVQTVDEILGYATQP. Residues 144–164 form a helical membrane-spanning segment; sequence GFMFYCTVVTLYSLFMIYKIV. At 165–175 the chain is on the cytoplasmic side; it reads PKYGNTNPMIY. Residues 176–196 traverse the membrane as a helical segment; the sequence is LSICSSVGSISVMSIKAFGIA. Over 197-206 the chain is Extracellular; that stretch reads LKLTLGGNNQ. Residues 207–227 traverse the membrane as a helical segment; the sequence is FTHVSTYLFLIVVALCIVTQM. Residues 228–240 lie on the Cytoplasmic side of the membrane; it reads NYFNKALDQFDTS. Residues 241–261 form a helical membrane-spanning segment; it reads IVNPLYYVTFTTFTLAASFIL. Topologically, residues 262–269 are extracellular; that stretch reads FKGFNTSS. N-linked (GlcNAc...) asparagine glycosylation occurs at Asn-266. Residues 270–290 form a helical membrane-spanning segment; sequence AVDIISLLIGFLIIFSGVYLL. The Cytoplasmic portion of the chain corresponds to 291–368; the sequence is NISRSESPMV…GDEDTRNYRH (78 aa).

This sequence belongs to the NIPA family.

The protein localises to the cell membrane. It is found in the early endosome. The enzyme catalyses Mg(2+)(in) = Mg(2+)(out). Its function is as follows. Probably acts as a selective Mg(2+) transporter. Plays a role in cell wall integrity and in engulfment by host macrophages. This Candida albicans (strain SC5314 / ATCC MYA-2876) (Yeast) protein is Probable magnesium transporter.